The primary structure comprises 294 residues: Small ribosomal subunit protein uS2 (294 aa).

The disordered stretch occupies residues 232–294; the sequence is RATGTTEAPE…SAAGEADAAK (63 aa). A compositionally biased stretch (basic and acidic residues) spans 246–259; sequence EWERELLEGSKSEE. Over residues 260 to 294 the composition is skewed to low complexity; sequence AAAPAAAEEAPAAAEEAPAAAEATESAAGEADAAK.

It belongs to the universal ribosomal protein uS2 family.

This chain is Small ribosomal subunit protein uS2, found in Arthrobacter sp. (strain FB24).